The primary structure comprises 180 residues: Type IV major pilin protein PilE1 (180 aa).

Positions 1 to 7 are excised as a propeptide; that stretch reads MNTLQKG. At Phe-8 the chain carries N-methylphenylalanine. A helical membrane pass occupies residues 8–28; that stretch reads FTLIELMIVIAIVGILAAVAL. Ser-70 is a glycosylation site (O-linked (GlcNAc...) serine). The cysteines at positions 128 and 160 are disulfide-linked.

The protein belongs to the N-Me-Phe pilin family. In terms of assembly, the pili are polar flexible filaments of about 5.4 nanometers diameter and 2.5 micrometers average length; they consist of only a single polypeptide chain arranged in a helical configuration of five subunits per turn in the assembled pilus.

Its subcellular location is the fimbrium. The protein resides in the membrane. Functionally, major component of the type IV pilus (T4P) that plays a role in cellular adherence, microcolony formation, resistance to neutrophil mediated killing, twitching motility as well as transformation. Mediates the attachment and the formation of bacterial microcolonies on host epithelial cells. Mechanistically, pili retractation induces host NF-kappa-B activation in infected cells, which is temporally associated with the formation of gonococcal microcolonies. In Neisseria gonorrhoeae, this protein is Type IV major pilin protein PilE1 (pilE1).